A 103-amino-acid polypeptide reads, in one-letter code: UPF0145 protein CYA_2258 (103 aa).

This sequence belongs to the UPF0145 family.

The sequence is that of UPF0145 protein CYA_2258 from Synechococcus sp. (strain JA-3-3Ab) (Cyanobacteria bacterium Yellowstone A-Prime).